Reading from the N-terminus, the 572-residue chain is MNVRVTTMDAELEFAIQQSTTGKQLFDQVVKTIGLREVWFFGLQYTDSKGDLTWIKLYKKVMSQDVQKGDPLQFKFRAKFYPEDVAEELIQDITLRLFYLQVKNAILSDEIYCPPETSVLLASYAVQARHGDYNKTTHTPGFLVNDRLLPQRVIDQHKMSKDEWENSITTWWQEHRGMLREDAMMEYLKIAQDLEMYGVNYFEIRNKKGTELWLGVDALGLNIYEKDDRLTPKIGFPWSEIRNISFNDRKFIIKPIDKKAPDFVFFAPRVRINKRILALCMGNHELYMRRRKPDTIDVQQMKAQAREEKNAKQQEREKLQLALAARERAEKKQQEYEDRIRNMQEEMERSQANLIEAQDMIRRLEEQLKQLQAAKDDLEQRQNELQVMITRLEETKNMEAAERAKLEDEIRMKQEEVHKIQEEVSVKDSETKRLQEEVEEARRKQTEAAAALLAATTTPSHHHVEEEEEMDNEEELVNGENGNQDFSKDFDTDEHIKDPVEERRTLAERNERLHDQLKALKQDLALSRDDTMETANDKIHRENVRQGRDKYKTLREIRKGNTKRRVDQFENM.

The 291-residue stretch at 1-291 (MNVRVTTMDA…GNHELYMRRR (291 aa)) folds into the FERM domain. Positions 456–491 (TTTPSHHHVEEEEEMDNEEELVNGENGNQDFSKDFD) are disordered. Acidic residues predominate over residues 466–477 (EEEEMDNEEELV). Phosphothreonine is present on Thr553.

As to quaternary structure, interacts with cytoskeletal actin.

The protein localises to the cell junction. Its subcellular location is the adherens junction. The protein resides in the cell projection. It localises to the microvillus. It is found in the rhabdomere. The protein localises to the cell membrane. Its subcellular location is the cytoplasm. The protein resides in the cytoskeleton. Involved in connections of major cytoskeletal structures to the plasma membrane. The chain is Moesin/ezrin/radixin homolog 1 from Culex quinquefasciatus (Southern house mosquito).